The sequence spans 129 residues: Small ribosomal subunit protein uS11 (129 aa).

This sequence belongs to the universal ribosomal protein uS11 family. Part of the 30S ribosomal subunit. Interacts with proteins S7 and S18. Binds to IF-3.

Functionally, located on the platform of the 30S subunit, it bridges several disparate RNA helices of the 16S rRNA. Forms part of the Shine-Dalgarno cleft in the 70S ribosome. The protein is Small ribosomal subunit protein uS11 of Aliivibrio fischeri (strain ATCC 700601 / ES114) (Vibrio fischeri).